We begin with the raw amino-acid sequence, 150 residues long: Cytochrome c oxidase subunit 5A, mitochondrial (150 aa).

The N-terminal 41 residues, 1–41 (MLGAALRRCAVAATTWAGPRGLLHSSRTPGPAAAIQSVRCY), are a transit peptide targeting the mitochondrion. Positions 2-17 (LGAALRRCAVAATTWA) match the SIFI-degron motif. N6-acetyllysine is present on residues K87 and K113. T141 is subject to Phosphothreonine.

Belongs to the cytochrome c oxidase subunit 5A family. In terms of assembly, component of the cytochrome c oxidase (complex IV, CIV), a multisubunit enzyme composed of 14 subunits. The complex is composed of a catalytic core of 3 subunits MT-CO1, MT-CO2 and MT-CO3, encoded in the mitochondrial DNA, and 11 supernumerary subunits COX4I, COX5A, COX5B, COX6A, COX6B, COX6C, COX7A, COX7B, COX7C, COX8 and NDUFA4, which are encoded in the nuclear genome. The complex exists as a monomer or a dimer and forms supercomplexes (SCs) in the inner mitochondrial membrane with NADH-ubiquinone oxidoreductase (complex I, CI) and ubiquinol-cytochrome c oxidoreductase (cytochrome b-c1 complex, complex III, CIII), resulting in different assemblies (supercomplex SCI(1)III(2)IV(1) and megacomplex MCI(2)III(2)IV(2)). Interacts with AFG1L. Interacts with RAB5IF. Post-translationally, in response to mitochondrial stress, the precursor protein is ubiquitinated by the SIFI complex in the cytoplasm before mitochondrial import, leading to its degradation. Within the SIFI complex, UBR4 initiates ubiquitin chain that are further elongated or branched by KCMF1.

The protein resides in the mitochondrion inner membrane. Its pathway is energy metabolism; oxidative phosphorylation. Functionally, component of the cytochrome c oxidase, the last enzyme in the mitochondrial electron transport chain which drives oxidative phosphorylation. The respiratory chain contains 3 multisubunit complexes succinate dehydrogenase (complex II, CII), ubiquinol-cytochrome c oxidoreductase (cytochrome b-c1 complex, complex III, CIII) and cytochrome c oxidase (complex IV, CIV), that cooperate to transfer electrons derived from NADH and succinate to molecular oxygen, creating an electrochemical gradient over the inner membrane that drives transmembrane transport and the ATP synthase. Cytochrome c oxidase is the component of the respiratory chain that catalyzes the reduction of oxygen to water. Electrons originating from reduced cytochrome c in the intermembrane space (IMS) are transferred via the dinuclear copper A center (CU(A)) of subunit 2 and heme A of subunit 1 to the active site in subunit 1, a binuclear center (BNC) formed by heme A3 and copper B (CU(B)). The BNC reduces molecular oxygen to 2 water molecules using 4 electrons from cytochrome c in the IMS and 4 protons from the mitochondrial matrix. The protein is Cytochrome c oxidase subunit 5A, mitochondrial (COX5A) of Colobus guereza (Mantled guereza).